The primary structure comprises 146 residues: UPF0260 protein Sbal_1871 (146 aa).

The protein belongs to the UPF0260 family.

The polypeptide is UPF0260 protein Sbal_1871 (Shewanella baltica (strain OS155 / ATCC BAA-1091)).